The sequence spans 576 residues: Vesicular glutamate transporter 1 (576 aa).

The Cytoplasmic portion of the chain corresponds to 1–63 (MEFRKEEFKK…CTCFGLPRRY (63 aa)). The chain crosses the membrane as a helical span at residues 64-84 (IIAIMSGLGFCISFGIRCNLG). Residues 85–116 (VAIVSMVNNNTVYKGNKLVIEQAQFNWDPETV) are Vesicular-facing. Asparagine 93 is a glycosylation site (N-linked (GlcNAc...) asparagine). The chain crosses the membrane as a helical span at residues 117–137 (GMIHGSFFWGYIVTQIPGGYI). The Cytoplasmic segment spans residues 138–140 (CQK). Residues 141 to 161 (FAANRVFGFAIVATSTLNMLI) form a helical membrane-spanning segment. Topologically, residues 162 to 168 (PSAARVH) are vesicular. A helical transmembrane segment spans residues 169–189 (FACVICVRILQGLVEGVTYPA). At 190–208 (CHGIWSKWAPPLERSRLAT) the chain is on the cytoplasmic side. The helical transmembrane segment at 209 to 229 (TAFCGSYAGAVVAMPLAGVLV) threads the bilayer. The Vesicular segment spans residues 230-236 (QYSGWSS). The chain crosses the membrane as a helical span at residues 237 to 257 (VFYVYGSFGITWYMFWILVSY). At 258–297 (ESPAQHPTISEEERKYIEESIGESTGFMNPMAKFKAPWRK) the chain is on the cytoplasmic side. The helical transmembrane segment at 298 to 320 (FFTSMPVYAIIVANFCRSWTFYL) threads the bilayer. Over 321–341 (LLISQPAYFEEVFGFAISKVG) the chain is Vesicular. A helical transmembrane segment spans residues 342–362 (LLSALPHLVMTIIVPIGGQIA). Topologically, residues 363 to 378 (DFLRTKRIMSTTNVRK) are cytoplasmic. A helical membrane pass occupies residues 379–399 (MMNCGGFGMEATLLLVVGYSH). Over 400 to 401 (SR) the chain is Vesicular. The chain crosses the membrane as a helical span at residues 402-422 (GVAISFLVLAVGFSGFAISGF). At 423 to 435 (NVNHLDIAPRYAS) the chain is on the cytoplasmic side. A helical membrane pass occupies residues 436–456 (ILMGISNGVGTLSGMVCPLIV). At 457 to 469 (GAMTKHKTREEWQ) the chain is on the vesicular side. Residues 470–490 (YVFLIASLVHYGGVVFYGIFA) traverse the membrane as a helical segment. Residues 491-576 (SGEKQPWAEP…YGTVAERDLS (86 aa)) are Cytoplasmic-facing. The interval 517-552 (ADESEEQTQAHGGYGSYGATQTTSQQNGGWATDWEK) is disordered. Residues 534 to 545 (GATQTTSQQNGG) show a composition bias toward polar residues.

It belongs to the major facilitator superfamily. Sodium/anion cotransporter family. VGLUT subfamily.

The protein resides in the cytoplasmic vesicle. The protein localises to the secretory vesicle. Its subcellular location is the synaptic vesicle membrane. It is found in the cell membrane. It localises to the synapse. The protein resides in the synaptosome. It catalyses the reaction L-glutamate(out) = L-glutamate(in). It carries out the reaction chloride(in) = chloride(out). The enzyme catalyses 3 Na(+)(out) + phosphate(out) = 3 Na(+)(in) + phosphate(in). The catalysed reaction is phosphate(in) = phosphate(out). It catalyses the reaction K(+)(in) + H(+)(out) = K(+)(out) + H(+)(in). Its activity is regulated as follows. Chloride channel activity is allosterically activated by lumenal H(+) and Cl(-) leading to synaptic vesicles acidification. The L-glutamate transport activity is allosterically activated by lumenal H(+) and Cl(-). The allosteric activation by H(+) efficiently prevents non-vesicular efflux across the plasma membrane, thereby restricting L-glutamate transport activity to acidic membranes such as synaptic vesicles. In terms of biological role, multifunctional transporter that transports L-glutamate as well as multiple ions such as chloride, proton, potassium, sodium and phosphate. At the synaptic vesicle membrane, mainly functions as an uniporter which transports preferentially L-glutamate but also phosphate from the cytoplasm into synaptic vesicles at presynaptic nerve terminals of excitatory neural cells. The L-glutamate or phosphate uniporter activity is electrogenic and is driven by the proton electrochemical gradient, mainly by the electrical gradient established by the vacuolar H(+)-ATPase across the synaptic vesicle membrane. In addition, functions as a chloride channel that allows a chloride permeation through the synaptic vesicle membrane that affects the proton electrochemical gradient and promotes synaptic vesicles acidification. Moreover, may function as a K(+)/H(+) antiport allowing to maintain the electrical gradient and to decrease chemical gradient and therefore sustain vesicular glutamate uptake. The vesicular K(+)/H(+) antiport activity is electroneutral. At the plasma membrane, following exocytosis, functions as a symporter of Na(+) and phosphate from the extracellular space to the cytoplasm allowing synaptic phosphate homeostasis regulation. The symporter activity is driven by an inside negative membrane potential and is electrogenic. Is necessary for synaptic signaling of visual-evoked responses from photoreceptors. In Xenopus laevis (African clawed frog), this protein is Vesicular glutamate transporter 1.